The sequence spans 192 residues: Peptidyl-tRNA hydrolase (192 aa).

Tyr14 contributes to the tRNA binding site. His19 functions as the Proton acceptor in the catalytic mechanism. Positions 64, 66, and 112 each coordinate tRNA.

Belongs to the PTH family. As to quaternary structure, monomer.

Its subcellular location is the cytoplasm. It catalyses the reaction an N-acyl-L-alpha-aminoacyl-tRNA + H2O = an N-acyl-L-amino acid + a tRNA + H(+). Functionally, hydrolyzes ribosome-free peptidyl-tRNAs (with 1 or more amino acids incorporated), which drop off the ribosome during protein synthesis, or as a result of ribosome stalling. In terms of biological role, catalyzes the release of premature peptidyl moieties from peptidyl-tRNA molecules trapped in stalled 50S ribosomal subunits, and thus maintains levels of free tRNAs and 50S ribosomes. This is Peptidyl-tRNA hydrolase from Anaeromyxobacter sp. (strain K).